Consider the following 227-residue polypeptide: DNA repair protein RecO (227 aa).

Belongs to the RecO family.

Functionally, involved in DNA repair and RecF pathway recombination. This Pseudomonas putida (strain W619) protein is DNA repair protein RecO.